The chain runs to 140 residues: uncharacterized protein (140 aa).

The interval 80–115 is disordered; it reads KNGTRRHALPSPLEGSFQPGRQIPPPQTPSTDPQTL.

This is an uncharacterized protein from Homo sapiens (Human).